The sequence spans 367 residues: Tubulin-like protein CetZ (367 aa).

GTP is bound by residues 11-15 (QCGNR), serine 111, 115-117 (GTG), glutamate 148, asparagine 176, and asparagine 194.

Belongs to the CetZ family.

The protein localises to the cytoplasm. In terms of biological role, involved in cell shape control. The protein is Tubulin-like protein CetZ of Methanothrix thermoacetophila (strain DSM 6194 / JCM 14653 / NBRC 101360 / PT) (Methanosaeta thermophila).